Here is a 233-residue protein sequence, read N- to C-terminus: UPF0502 protein Mpe_A1449 (233 aa).

Belongs to the UPF0502 family.

This chain is UPF0502 protein Mpe_A1449, found in Methylibium petroleiphilum (strain ATCC BAA-1232 / LMG 22953 / PM1).